Reading from the N-terminus, the 91-residue chain is MCLLQLPVVLLLLSAALNTLKATPIASDTDHRVDKRKCNTATCATQRLTNFLVRSSHNLGAALPPTKVGSNTYGRRNAEVVDVELLHYLPL.

The N-terminal stretch at 1 to 22 is a signal peptide; it reads MCLLQLPVVLLLLSAALNTLKA. The propeptide occupies 23-34; the sequence is TPIASDTDHRVD. Cys38 and Cys43 form a disulfide bridge. Tyrosine amide is present on Tyr73. Positions 77–91 are excised as a propeptide; it reads NAEVVDVELLHYLPL.

Belongs to the calcitonin family. In terms of assembly, can form homodimers. Interacts with IDE and INS. Interaction with INS inhibits homodimerization and fibril formation.

It localises to the secreted. In terms of biological role, amylin/IAPP is a glucoregulatory peptide hormone that plays an important role in the regulation of energy homeostasis. Selectively inhibits insulin-stimulated glucose utilization and glycogen deposition in muscle, while not affecting adipocyte glucose metabolism. IAPP function is mediated by the CALCR-RAMPs (AMYRs) receptor complexes. Amylin can also bind CALCR receptor in the absence of RAMPs, although it is more selective for AMYRs. The sequence is that of Islet amyloid polypeptide (IAPP) from Octodon degus (Degu).